The sequence spans 452 residues: Tripartite motif-containing protein 49C (452 aa).

The RING-type zinc-finger motif lies at Cys-15–Thr-56. Residues Ser-88–Ile-129 form a B box-type zinc finger. Zn(2+) is bound by residues Cys-93, His-96, Cys-115, and His-121. The B30.2/SPRY domain maps to Glu-269–Phe-452.

The polypeptide is Tripartite motif-containing protein 49C (TRIM49C) (Homo sapiens (Human)).